Here is a 217-residue protein sequence, read N- to C-terminus: GTP-binding protein yptV2 (217 aa).

20–27 contacts GTP; it reads GDSGVGKS. The Effector region signature appears at 42 to 50; sequence FITTIGIDF. GTP-binding positions include 68–72 and 126–129; these read DTAGQ and NKLD. Positions 198–217 are disordered; sequence QPVRLTSGSPSPAQGKSCCR. The span at 201 to 211 shows a compositional bias: polar residues; sequence RLTSGSPSPAQ. Residues C215 and C216 are each lipidated (S-geranylgeranyl cysteine).

Belongs to the small GTPase superfamily. Rab family.

Its subcellular location is the cell membrane. Its function is as follows. Protein transport. Probably involved in vesicular traffic. The sequence is that of GTP-binding protein yptV2 (YPTV2) from Volvox carteri (Green alga).